The sequence spans 321 residues: tRNA-dihydrouridine synthase B (321 aa).

FMN-binding positions include 16-18 (PMA) and Q70. Residue C100 is the Proton donor of the active site. FMN-binding positions include K139, 200–202 (NGD), and 224–225 (GR).

This sequence belongs to the Dus family. DusB subfamily. The cofactor is FMN.

It carries out the reaction a 5,6-dihydrouridine in tRNA + NAD(+) = a uridine in tRNA + NADH + H(+). It catalyses the reaction a 5,6-dihydrouridine in tRNA + NADP(+) = a uridine in tRNA + NADPH + H(+). In terms of biological role, catalyzes the synthesis of 5,6-dihydrouridine (D), a modified base found in the D-loop of most tRNAs, via the reduction of the C5-C6 double bond in target uridines. The polypeptide is tRNA-dihydrouridine synthase B (Pectobacterium carotovorum (Erwinia carotovora)).